The primary structure comprises 205 residues: ATP-dependent Clp protease proteolytic subunit (205 aa).

Catalysis depends on Ser-98, which acts as the Nucleophile. Residue His-123 is part of the active site.

The protein belongs to the peptidase S14 family. Fourteen ClpP subunits assemble into 2 heptameric rings which stack back to back to give a disk-like structure with a central cavity, resembling the structure of eukaryotic proteasomes.

Its subcellular location is the cytoplasm. It catalyses the reaction Hydrolysis of proteins to small peptides in the presence of ATP and magnesium. alpha-casein is the usual test substrate. In the absence of ATP, only oligopeptides shorter than five residues are hydrolyzed (such as succinyl-Leu-Tyr-|-NHMec, and Leu-Tyr-Leu-|-Tyr-Trp, in which cleavage of the -Tyr-|-Leu- and -Tyr-|-Trp bonds also occurs).. Functionally, cleaves peptides in various proteins in a process that requires ATP hydrolysis. Has a chymotrypsin-like activity. Plays a major role in the degradation of misfolded proteins. This is ATP-dependent Clp protease proteolytic subunit from Desulfosudis oleivorans (strain DSM 6200 / JCM 39069 / Hxd3) (Desulfococcus oleovorans).